Reading from the N-terminus, the 2894-residue chain is MANFTKLKNRLRADFTKNPQSIDVPNLLLLQRNSYDDFLCVDSDKESGIERVFKSVFPIQDSQNRITLEYVSCKFGKPKYTTNEAMVRGVTYAVSLQIKIRLVLWEKDEKTGERLGIKDAKEQNIFVRDIPLMTDRTSFIINGVERVVVNQLHRSPGVIFKEEESSASSNKLIYTGQIIPDRGSWLYFEYDSKDVLYARINKRRKVPVTIILRAMGYSKQDILKIFYPLQRVKYKKGKYLIPFDVDSIGNRAEFDIKDAKGNLLVSSGKRLSTKKIKELKEAKIDLIEYPLENLTNKFLAEPIINAQGEVLFDTLTQLDESKLKKLLELKINEFVIANASAAGVDNSIINSFMADAESLKMLRQSEKIDDENELAAIRIYKVMRPGEPVTKEVAKSFVRQLFFDPERYDLTRVGRMKMNHKLQINVPDYVTVLTHEDIIRTIQYLLKVKNGLGKIDDRDHLGNRRIRSIGELLANELHTGLVKMQKAIRDKLTSLSGAFDTIMPHDLINGKMITSTIMEFFTGGQLSQFMDQTNPLSEVTHKRRLSALGEGGLVKDRVGFEARDVHPTHYGRICPIETPEGQNIGLINTLSTYTRVNDLGFIEAPYRKVENGIVSQEIVYLTAAQEEGIVIAPASTAVDKNGHIIEDLIETRKDGEIILSEKSRVQLIDLSPRMLVGVAASLIPFLEHDDANRALMGSNMQRQAVPLLKPDAPVVGTGIEQIIARDSWEATKATRSGVVERVDAKNIYILGEDDNGAYIDHYHLGKNLRTNQNTCFSQQPIVRQGDRVEQGQIIADGPSMDNGELALGKNIRVAFMPWNGYNFEDAIVVSERLIKEDAFTSIHIYEKEIEARELKHGLEEITADIPGTKEAETAHLDESGIVRIGTYVSAGMILVGKVSPKGEVKPTPEERLLRAIFGEKAGHVVNKSLYCPPSLEGTVVDVKIFTKKGYEKDARAISAYEEEKRVLDIEHHDRLTMIQQEETLRISLMLSKEKLLSEVKVADKVFKKGAQIPKEELSVLNPFILSTLIKHYPKEIQTRYEQIKTNFLEQKKTLGEEHEEKLSILEKDDILPSGVVKLVKIYIATKRKLKVGDKMAGRHGNKGIVSNIVPMVDMPYTADGEPVDIVLNPLGVPSRMNIGQILEVHLGLVGKRLGQQIQEILSSQSKQWLDTLRSKMIEIAQVVNSDDKSMIEFLKNLDNEALLAYARDWSNGVKFAIPVFEGIEQEKFDKLFSLVKVDMDGKTELYDGKTGEKMRERVNVGYMYMLKLHHLVDEKVHARSTGPYSLVTQQPVGGKALFGGQRFGEMEVWALEAYGAAHTLKEMLTIKSDDTEGRRGAYKAITKGEHVGESEIPETFYVLTKELQSLALDVNIYGDEQDENGMPVPIAIKEDERPKDFSSFQLVLASPEKILSWSNGEVKKPETINYRTLKPERDGLFCTKIFGPVRDYECLCGKYKKMRYKGIVCEKCGVEVTKAKVRRSRMGHIELVAPVAHIWYVSSLPSRIGTLLGVKMKDLERVLYYEAYIVKSPGEAFYDNEGSKPILKYDVLNEEQFQSINQRFEHTGFVAQMGGEAIKELLEELDLILLLNTLREEIRSTNSEAKKKTIVKRLKVVESFINSGNRPEWMMLTILPVLPPDLRPLVALDGGKFAVSDVNDLYRRVINRNQRLKRLIELDSPEIIVRNEKRMLQEAVDALFDNGRNANAVKGANKRPLKSLSEIIKGKQGRFRQNLLGKRVDFSGRSVIVVGPNLKMNQCGLPKNMALELFKPHLFAKLEEKGYATTLKQAVKMVNQKTNEVWECLQEIVNGYPVLLNRAPTLHKQSIQAFHPKLIDGKAIQLHPLVCSAFNADFDGDQMAVHVPLSQEAIAECKILMLSSMNILLPASGKAVAVPSQDMVLGLYYLSLEKKGVKGEHKILASIDEIVMAIEMGELDINARIKTVHNRRVIDTTAGRMILSSILPDFVPLNLWNQTMKKKDIGTLIDYVYKEGGLGITATFLDNLKNLGFKYATKAGISISAADIIIPHNKATMIDEAKKEIKRIQGEFEQGLLTAQERYNKSIDIWTETSEKMGKLMMEKVKNDKEGFNSIYMMADSGARGSEAQIRQLSAMRGLMAKPDGTIIETPITSNFKEGLNVLEYFNSTHGARKGLADTALKTANAGYLTRKLIDVSQNMKVTIEDCGTHEGVEITDITVGSDMIEPLEERVVGRVLARDVIDPIANEILLSEGVLIDSTMARRIKEANVKSVMIRTPVTCKAQKGVCAKCYGLNLGESKMVKPGEAVGVLAAQSIGEPGTQLTLRTFHVGGTASRSTEEKQIVAKKEGFIRYYNIRTYTNSKGQKIVANRRNAAILVVEPRIKAEFDGELEVENVHDEVHITIVGDKKRSETYRLRKDDVAKQNELAGVAGKIEGKLLVPHESGYKVKAGGSIVDTIMDSWNIPTRIPYGSELKVEDNAPISQKITAKEKGIVKFYTLRADTLERNHNVKAGMVVSEKGMFAVIADQNDREAIRHYIARTSKILVDDNSEVDINTLISEPTSTEQIVVAEWDAYSEPIIADQAGIVSFRDIIAGLTVSEQEDENTHQKNFVINEYVPAGYKPMLVVTTKDGKEISYRLESRTSIAVNDGDKVEIADIIAKVPKALAKSKDITGGLPRVTELFEARKPKDTAILSELDGTVSFGKPIRGKERIIITAADGRVAEYAVDKNKKILVHEQEFIHAGEAMTDGVISSHDILRISGEKELHKYIVSEVQQVYRRQGVSIADKHIEIIVSQMLRQVKIVDSGNTKFIEGDLASKRHFKEENERILSIGGEPAVAEPVLLGITRAAIGSDSIISAASFQETTKVLTEASIAAKKDTLDDLKENVVLGRMIPVGTGLYKNKKFHYRCEKQEEYEEDEEE.

Residues 1 to 1378 form a DNA-directed RNA polymerase subunit beta region; sequence MANFTKLKNR…DVNIYGDEQD (1378 aa). The segment at 1385-2894 is DNA-directed RNA polymerase subunit beta'; the sequence is PIAIKEDERP…QEEYEEDEEE (1510 aa). Zn(2+)-binding residues include Cys1450, Cys1452, Cys1465, and Cys1468. Residues Asp1849, Asp1851, and Asp1853 each contribute to the Mg(2+) site. Residues Cys2179, Cys2253, Cys2260, and Cys2263 each coordinate Zn(2+).

In the N-terminal section; belongs to the RNA polymerase beta chain family. This sequence in the C-terminal section; belongs to the RNA polymerase beta' chain family. As to quaternary structure, the RNAP catalytic core consists of 2 alpha, 1 beta/beta' and 1 omega subunit. When a sigma factor is associated with the core the holoenzyme is formed, which can initiate transcription. It depends on Mg(2+) as a cofactor. Zn(2+) serves as cofactor.

It carries out the reaction RNA(n) + a ribonucleoside 5'-triphosphate = RNA(n+1) + diphosphate. DNA-dependent RNA polymerase catalyzes the transcription of DNA into RNA using the four ribonucleoside triphosphates as substrates. This chain is Bifunctional DNA-directed RNA polymerase subunit beta-beta' (rpoBC), found in Helicobacter hepaticus (strain ATCC 51449 / 3B1).